Reading from the N-terminus, the 642-residue chain is Forkhead box protein K2 (642 aa).

One can recognise an FHA domain in the interval 30 to 91; that stretch reads VTIGRNSSQG…NGVFVDGVFQ (62 aa). The disordered stretch occupies residues 201 to 221; it reads QSENDKDASGGDSPKDDSKPP. Residues 203–219 are compositionally biased toward basic and acidic residues; that stretch reads ENDKDASGGDSPKDDSK. Positions 219-314 form a DNA-binding region, fork-head; it reads KPPYSYAQLI…EQAFRKRRPR (96 aa). Positions 261-279 are DNA-binding; major groove; sequence KGWQNSIRHNLSLNRYFIK. L271, S272, N274, and F277 together coordinate Mg(2+). DNA-binding; minor groove stretches follow at residues 289–293 and 309–314; these read KGSFW and RKRRPR. Disordered stretches follow at residues 323-359 and 589-615; these read LGPL…REGS and ASAS…KTDE. Polar residues-rich tracts occupy residues 327–353 and 589–605; these read SSRS…TPES and ASAS…QSEQ. Positions 606 to 615 are enriched in basic and acidic residues; it reads PDIKRGKTDE.

In neurula embryos, expressed strongly in the future floor plate and weakly in the neural crest progenitor cells. As development progresses, expression becomes stronger in neural crest cells. At stage 24, expressed in the eye, brain, branchial arches and in the presomitic mesoderm in the posterior embryo. At stage 29, additionally expressed in the pronephric tubules. At stage 35, expressed in the migrating lateral muscle precursors of the abdomen. Additionally, the developing proctodeum and head structures including the branchial arches, eyes and otic vesicles continue to show expression. Expression also persists in the nephros.

The protein resides in the nucleus. It is found in the cytoplasm. Its function is as follows. Transcriptional regulator involved in different processes such as glucose metabolism, aerobic glycolysis and autophagy. Recognizes and binds the forkhead DNA sequence motif (5'-GTAAACA-3') and can both act as a transcription activator or repressor, depending on the context. Acts as a key regulator of metabolic reprogramming towards aerobic glycolysis, a process in which glucose is converted to lactate in the presence of oxygen. Acts as a negative regulator of autophagy in skeletal muscle: in response to starvation, enters the nucleus, binds the promoters of autophagy genes and represses their expression, preventing proteolysis of skeletal muscle proteins. The protein is Forkhead box protein K2 of Xenopus laevis (African clawed frog).